A 397-amino-acid polypeptide reads, in one-letter code: Formate-dependent phosphoribosylglycinamide formyltransferase (397 aa).

Residues 21-22 (EL) and Glu-81 contribute to the N(1)-(5-phospho-beta-D-ribosyl)glycinamide site. ATP-binding positions include Arg-113, Lys-154, 194–197 (EEYV), and Glu-202. Residues 118–313 (KLAAEKVKVP…EFQIHVRSAL (196 aa)) enclose the ATP-grasp domain. Residues Glu-272 and Glu-284 each contribute to the Mg(2+) site. N(1)-(5-phospho-beta-D-ribosyl)glycinamide is bound by residues Asp-291, Lys-361, and 368-369 (RR).

It belongs to the PurK/PurT family. As to quaternary structure, homodimer.

The catalysed reaction is N(1)-(5-phospho-beta-D-ribosyl)glycinamide + formate + ATP = N(2)-formyl-N(1)-(5-phospho-beta-D-ribosyl)glycinamide + ADP + phosphate + H(+). The protein operates within purine metabolism; IMP biosynthesis via de novo pathway; N(2)-formyl-N(1)-(5-phospho-D-ribosyl)glycinamide from N(1)-(5-phospho-D-ribosyl)glycinamide (formate route): step 1/1. Its function is as follows. Involved in the de novo purine biosynthesis. Catalyzes the transfer of formate to 5-phospho-ribosyl-glycinamide (GAR), producing 5-phospho-ribosyl-N-formylglycinamide (FGAR). Formate is provided by PurU via hydrolysis of 10-formyl-tetrahydrofolate. The polypeptide is Formate-dependent phosphoribosylglycinamide formyltransferase (Sulfurisphaera tokodaii (strain DSM 16993 / JCM 10545 / NBRC 100140 / 7) (Sulfolobus tokodaii)).